We begin with the raw amino-acid sequence, 491 residues long: Protein translocase subunit SecY (491 aa).

Topologically, residues 1-20 (MGWKEAAAPVLTRMPAVERP) are cytoplasmic. The helical transmembrane segment at 21-47 (EGHVPFRRKMYWTGGVLVLYFFLTNVP) threads the bilayer. The Extracellular portion of the chain corresponds to 48–58 (LWGIQTAGNDF). The helical intramembrane region spans 59-66 (FGQFRSLL). The chain crosses the membrane as a discontinuously helical span at residues 59 to 87 (FGQFRSLLAGGQGTVLQLGIGPIVTASIV). The stretch at 67-78 (AGGQGTVLQLGI) is an intramembrane region. The segment at residues 79 to 87 (GPIVTASIV) is an intramembrane region (helical). Residues 88–109 (LQLLGGANLLGLDTDNDPRDQA) lie on the Cytoplasmic side of the membrane. A helical transmembrane segment spans residues 110–134 (IYQGLQKFLVGVMVVLTGAPMVFLG). The Extracellular portion of the chain corresponds to 135–152 (NFLQPSQQLAQSMPGGAF). The helical transmembrane segment at 153–177 (GVEVLIFAQIAAGGILLLFMDEVIS) threads the bilayer. Over 178–183 (KWGVGS) the chain is Cytoplasmic. The chain crosses the membrane as a helical span at residues 184-202 (GIGLFIVAGVSQSLVGGLV). Residues 203-244 (FWEGGVGSQGLLPTWFDIIVGNVSNMPPLLSGSGIEFLLMQA) lie on the Extracellular side of the membrane. The helical transmembrane segment at 245-266 (GILGLLTTLFIYVVVVYAESVR) threads the bilayer. Over 267-291 (VEIPLSHARVKGARGRFPVKLIYAS) the chain is Cytoplasmic. The chain crosses the membrane as a helical span at residues 292–313 (VLPMILVRALQANIQFLGQILN). Residues 314 to 365 (STLASMPTWLGVYGGNGQVTGGLFYYLAPIYSPNAWMWWTSGATAARWQVLI) lie on the Extracellular side of the membrane. A helical membrane pass occupies residues 366–385 (RIAIDLSFMIIGGAIFAIFW). At 386–428 (VETADMGPDATARQIQNSGMQIPGFRKNQGVIEKVMERYIPQV) the chain is on the cytoplasmic side. A helical membrane pass occupies residues 429–447 (TVIGGALVGLLAVMANMLG). The Extracellular segment spans residues 448–452 (TIGNV). Residues 453–467 (SGTGLLLTISITYKL) traverse the membrane as a helical segment. The Cytoplasmic portion of the chain corresponds to 468–491 (YEEIAEEQMMEMHPMMREMFGGGD).

It belongs to the SecY/SEC61-alpha family. As to quaternary structure, component of the Sec protein translocase complex. Heterotrimer consisting of alpha (SecY), beta (SecG) and gamma (SecE) subunits. The heterotrimers can form oligomers, although 1 heterotrimer is thought to be able to translocate proteins. Interacts with the ribosome. May interact with SecDF, and other proteins may be involved.

The protein resides in the cell membrane. Functionally, the central subunit of the protein translocation channel SecYEG. Consists of two halves formed by TMs 1-5 and 6-10. These two domains form a lateral gate at the front which open onto the bilayer between TMs 2 and 7, and are clamped together by SecE at the back. The channel is closed by both a pore ring composed of hydrophobic SecY resides and a short helix (helix 2A) on the extracellular side of the membrane which forms a plug. The plug probably moves laterally to allow the channel to open. The ring and the pore may move independently. This is Protein translocase subunit SecY from Halobacterium salinarum (strain ATCC 700922 / JCM 11081 / NRC-1) (Halobacterium halobium).